The primary structure comprises 160 residues: Phosphopantetheine adenylyltransferase (160 aa).

Thr10 provides a ligand contact to substrate. ATP-binding positions include 10 to 11 (TF) and His18. The substrate site is built by Lys42, Leu74, and Arg88. ATP contacts are provided by residues 89-91 (GLR), Glu99, and 124-130 (NSFISST).

Belongs to the bacterial CoaD family. Homohexamer. Mg(2+) is required as a cofactor.

It is found in the cytoplasm. The catalysed reaction is (R)-4'-phosphopantetheine + ATP + H(+) = 3'-dephospho-CoA + diphosphate. Its pathway is cofactor biosynthesis; coenzyme A biosynthesis; CoA from (R)-pantothenate: step 4/5. Reversibly transfers an adenylyl group from ATP to 4'-phosphopantetheine, yielding dephospho-CoA (dPCoA) and pyrophosphate. The polypeptide is Phosphopantetheine adenylyltransferase (Photobacterium damsela subsp. piscicida (Pasteurella piscicida)).